The primary structure comprises 520 residues: Cytochrome P450 monooxygenase btcC (520 aa).

A helical transmembrane segment spans residues 2 to 22; sequence IFLLTLAGLKVLSIVILFGII. N-linked (GlcNAc...) asparagine glycosylation is present at Asn-177. Cys-448 contributes to the heme binding site. Asn-511 carries an N-linked (GlcNAc...) asparagine glycan.

It belongs to the cytochrome P450 family. Requires heme as cofactor.

The protein resides in the membrane. Its pathway is secondary metabolite biosynthesis; terpenoid biosynthesis. Functionally, cytochrome P4590 monooxygenase part of the gene cluster that mediates the biosynthesis of betaestacins. The bifunctional terpene synthase btcA converts isopentenyl diphosphate (IPP) and dimethylallyl diphosphate (DMAPP) into the sesterterpene betaestacin I. The C-terminal prenyltransferase (PT) domain of btcA catalyzes formation of GFPP, whereas the N-terminal terpene cyclase (TC) domain catalyzes the cyclization of GFPP into betaestacin I. The cytochrome P450 monooxygenase btcB oxidizes the C25 methyl group of betaestacin I to yield the carboxylic acid betaestacin IV via the alcohol betaestacin III. The cytochrome P450 monooxygenase btcC further catalyzes the multistep oxidation of betaestacin IV to produce several compounds, including betaestacins Va, Vb, Vc and VI. The protein is Cytochrome P450 monooxygenase btcC of Colletotrichum orbiculare (strain 104-T / ATCC 96160 / CBS 514.97 / LARS 414 / MAFF 240422) (Cucumber anthracnose fungus).